The following is a 545-amino-acid chain: ATP synthase F(1) complex subunit alpha, mitochondrial (545 aa).

Q216, G218, K219, T220, and S221 together coordinate ATP. T220 contributes to the Mg(2+) binding site. Residue D304 participates in Mg(2+) binding. Positions 465 and 467 each coordinate ATP.

Belongs to the ATPase alpha/beta chains family. As to quaternary structure, homotrimer. Component of the ATP synthase complex composed at least of ATP5F1A/subunit alpha, ATP5F1B/subunit beta, ATP5MC1/subunit c (homooctomer), MT-ATP6/subunit a, MT-ATP8/subunit 8, ATP5ME/subunit e, ATP5MF/subunit f, ATP5MG/subunit g, ATP5MK/subunit k, ATP5MJ/subunit j, ATP5F1C/subunit gamma, ATP5F1D/subunit delta, ATP5F1E/subunit epsilon, ATP5PF/subunit F6, ATP5PB/subunit b, ATP5PD/subunit d, ATP5PO/subunit OSCP. ATP synthase complex consists of a soluble F(1) head domain (subunits alpha(3) and beta(3)) - the catalytic core - and a membrane F(0) domain - the membrane proton channel (subunits c, a, 8, e, f, g, k and j). These two domains are linked by a central stalk (subunits gamma, delta, and epsilon) rotating inside the F1 region and a stationary peripheral stalk (subunits F6, b, d, and OSCP).

It is found in the mitochondrion inner membrane. In terms of biological role, subunit alpha, of the mitochondrial membrane ATP synthase complex (F(1)F(0) ATP synthase or Complex V) that produces ATP from ADP in the presence of a proton gradient across the membrane which is generated by electron transport complexes of the respiratory chain. ATP synthase complex consist of a soluble F(1) head domain - the catalytic core - and a membrane F(1) domain - the membrane proton channel. These two domains are linked by a central stalk rotating inside the F(1) region and a stationary peripheral stalk. During catalysis, ATP synthesis in the catalytic domain of F(1) is coupled via a rotary mechanism of the central stalk subunits to proton translocation. In vivo, can only synthesize ATP although its ATP hydrolase activity can be activated artificially in vitro. With the catalytic subunit beta (ATP5F1B), forms the catalytic core in the F(1) domain. Subunit alpha does not bear the catalytic high-affinity ATP-binding sites. This chain is ATP synthase F(1) complex subunit alpha, mitochondrial, found in Xenopus laevis (African clawed frog).